The chain runs to 95 residues: uncharacterized protein (95 aa).

Lys-21 contacts phosphate. Asp-44 is a Mg(2+) binding site. Asn-47 is a binding site for phosphate.

The protein belongs to the HAD-like hydrolase superfamily. Cof family. Requires Mg(2+) as cofactor.

This is an uncharacterized protein from Geobacillus stearothermophilus (Bacillus stearothermophilus).